Reading from the N-terminus, the 437-residue chain is MAAPRRYFPGIVRALLGAWQVGSHAGREWVSPPGSLLGNHVRCVSCVVGATFSGPLLASASSRYGQDSALDRILGFPQPDSSLVPCVPAVSVHRDEQNLLLVHTPDMPENPRVLRVVLLGAPNAGKSTLSNQLLGRKVFPVSKKVHTTRCQALGVITEKETQVILLDTPGIISPVKQKRHHLELSLLEDPWKSMESADLVVVLVDVSDKWTRSRLSPQVLQCLTKFSQVPSILVLNKVDCLKQKSVLLELTAALTEGVVNGKMLNVRQAFRSRPSTHCPGPETEDPNTHAVRSPQRTGWPYFQEIFMLSALNNKDVNTLKQYLLTQAQPGPWEFHSGVLTSQTPEEICANKIREKLLEYLPEEVPYSVQQKTVIWEEGPSGELVIQQNLLVPKESHVRILIGQKGLLISQIAQEVSQDLMDIFLCDVLLRLSVKLLK.

The transit peptide at 1 to 20 (MAAPRRYFPGIVRALLGAWQ) directs the protein to the mitochondrion. Residues 112–330 (RVLRVVLLGA…QYLLTQAQPG (219 aa)) enclose the Era-type G domain. Positions 120–127 (GAPNAGKS) are G1. 120–127 (GAPNAGKS) provides a ligand contact to GTP. The tract at residues 146 to 150 (HTTRC) is G2. The segment at 167–170 (DTPG) is G3. 167-171 (DTPGI) is a GTP binding site. S173 bears the Phosphoserine mark. 236–239 (NKVD) contributes to the GTP binding site. The G4 stretch occupies residues 236 to 239 (NKVD). The interval 272–293 (SRPSTHCPGPETEDPNTHAVRS) is disordered. The tract at residues 308-310 (LSA) is G5. The region spanning 360–437 (LPEEVPYSVQ…LLRLSVKLLK (78 aa)) is the KH type-2 domain.

It belongs to the TRAFAC class TrmE-Era-EngA-EngB-Septin-like GTPase superfamily. Era GTPase family.

It localises to the mitochondrion matrix. Its subcellular location is the mitochondrion inner membrane. Functionally, probable GTPase that plays a role in the mitochondrial ribosomal small subunit assembly. Specifically binds the 12S mitochondrial rRNA (12S mt-rRNA) to a 33 nucleotide section delineating the 3' terminal stem-loop region. May act as a chaperone that protects the 12S mt-rRNA on the 28S mitoribosomal subunit during ribosomal small subunit assembly. The protein is GTPase Era, mitochondrial (Eral1) of Rattus norvegicus (Rat).